Reading from the N-terminus, the 419-residue chain is Mitochondrial chaperone BCS1 (419 aa).

The Mitochondrial intermembrane portion of the chain corresponds to 1 to 15 (MPLSDFVLALKDNPY). A helical transmembrane segment spans residues 16-32 (FGAGFGLVGVGTALALA). Residues 33 to 419 (RKGAQLGLVA…AIQNAESLRR (387 aa)) are Mitochondrial matrix-facing. A Phosphotyrosine modification is found at tyrosine 181. 230-237 (GPPGCGKS) is an ATP binding site.

Belongs to the AAA ATPase family. BCS1 subfamily. In terms of assembly, interacts with LETM1.

It is found in the mitochondrion inner membrane. The catalysed reaction is ATP + H2O = ADP + phosphate + H(+). Functionally, chaperone necessary for the incorporation of Rieske iron-sulfur protein UQCRFS1 into the mitochondrial respiratory chain complex III. Plays an important role in the maintenance of mitochondrial tubular networks, respiratory chain assembly and formation of the LETM1 complex. The sequence is that of Mitochondrial chaperone BCS1 (BCS1L) from Bos taurus (Bovine).